We begin with the raw amino-acid sequence, 96 residues long: Putative membrane protein insertion efficiency factor (96 aa).

The segment covering 71–84 (THGTAAAPPASAAP) has biased composition (low complexity). The segment at 71-96 (THGTAAAPPASAAPGRPPVTVRLPRP) is disordered.

Belongs to the UPF0161 family.

Its subcellular location is the cell inner membrane. In terms of biological role, could be involved in insertion of integral membrane proteins into the membrane. The sequence is that of Putative membrane protein insertion efficiency factor from Cupriavidus metallidurans (strain ATCC 43123 / DSM 2839 / NBRC 102507 / CH34) (Ralstonia metallidurans).